Reading from the N-terminus, the 297-residue chain is 4-hydroxy-tetrahydrodipicolinate synthase (297 aa).

Pyruvate is bound at residue Thr-45. Tyr-133 acts as the Proton donor/acceptor in catalysis. Residue Lys-161 is the Schiff-base intermediate with substrate of the active site. A pyruvate-binding site is contributed by Ile-205.

The protein belongs to the DapA family. As to quaternary structure, homotetramer; dimer of dimers.

It localises to the cytoplasm. It catalyses the reaction L-aspartate 4-semialdehyde + pyruvate = (2S,4S)-4-hydroxy-2,3,4,5-tetrahydrodipicolinate + H2O + H(+). The protein operates within amino-acid biosynthesis; L-lysine biosynthesis via DAP pathway; (S)-tetrahydrodipicolinate from L-aspartate: step 3/4. Catalyzes the condensation of (S)-aspartate-beta-semialdehyde [(S)-ASA] and pyruvate to 4-hydroxy-tetrahydrodipicolinate (HTPA). The protein is 4-hydroxy-tetrahydrodipicolinate synthase of Dichelobacter nodosus (strain VCS1703A).